Consider the following 361-residue polypeptide: Peptide chain release factor 1 (361 aa).

Residue Gln-235 is modified to N5-methylglutamine.

The protein belongs to the prokaryotic/mitochondrial release factor family. Methylated by PrmC. Methylation increases the termination efficiency of RF1.

It localises to the cytoplasm. Functionally, peptide chain release factor 1 directs the termination of translation in response to the peptide chain termination codons UAG and UAA. The chain is Peptide chain release factor 1 from Chlamydia felis (strain Fe/C-56) (Chlamydophila felis).